The sequence spans 132 residues: Small ribosomal subunit protein uS8 (132 aa).

It belongs to the universal ribosomal protein uS8 family. Part of the 30S ribosomal subunit. Contacts proteins S5 and S12.

One of the primary rRNA binding proteins, it binds directly to 16S rRNA central domain where it helps coordinate assembly of the platform of the 30S subunit. This Bradyrhizobium sp. (strain BTAi1 / ATCC BAA-1182) protein is Small ribosomal subunit protein uS8.